We begin with the raw amino-acid sequence, 366 residues long: UDP-N-acetylglucosamine--N-acetylmuramyl-(pentapeptide) pyrophosphoryl-undecaprenol N-acetylglucosamine transferase (366 aa).

Residues 10–12 (TGG), Asn124, Arg165, Ser195, Ile250, and Gln295 each bind UDP-N-acetyl-alpha-D-glucosamine.

The protein belongs to the glycosyltransferase 28 family. MurG subfamily.

The protein resides in the cell inner membrane. It carries out the reaction di-trans,octa-cis-undecaprenyl diphospho-N-acetyl-alpha-D-muramoyl-L-alanyl-D-glutamyl-meso-2,6-diaminopimeloyl-D-alanyl-D-alanine + UDP-N-acetyl-alpha-D-glucosamine = di-trans,octa-cis-undecaprenyl diphospho-[N-acetyl-alpha-D-glucosaminyl-(1-&gt;4)]-N-acetyl-alpha-D-muramoyl-L-alanyl-D-glutamyl-meso-2,6-diaminopimeloyl-D-alanyl-D-alanine + UDP + H(+). The protein operates within cell wall biogenesis; peptidoglycan biosynthesis. Functionally, cell wall formation. Catalyzes the transfer of a GlcNAc subunit on undecaprenyl-pyrophosphoryl-MurNAc-pentapeptide (lipid intermediate I) to form undecaprenyl-pyrophosphoryl-MurNAc-(pentapeptide)GlcNAc (lipid intermediate II). In Thermodesulfovibrio yellowstonii (strain ATCC 51303 / DSM 11347 / YP87), this protein is UDP-N-acetylglucosamine--N-acetylmuramyl-(pentapeptide) pyrophosphoryl-undecaprenol N-acetylglucosamine transferase.